Reading from the N-terminus, the 357-residue chain is NADH-quinone oxidoreductase subunit H (357 aa).

Transmembrane regions (helical) follow at residues 20 to 40 (WLLV…MGCV), 92 to 112 (ALFV…WAVI), 127 to 147 (LLFV…AGWA), 165 to 185 (ISYE…SGSL), 203 to 223 (GLTF…IYII), 259 to 279 (FFLA…LMFL), 294 to 314 (IPGW…FIWF), and 329 to 349 (LGWK…AIWM).

It belongs to the complex I subunit 1 family. In terms of assembly, NDH-1 is composed of 14 different subunits. Subunits NuoA, H, J, K, L, M, N constitute the membrane sector of the complex.

It localises to the cell inner membrane. The enzyme catalyses a quinone + NADH + 5 H(+)(in) = a quinol + NAD(+) + 4 H(+)(out). Functionally, NDH-1 shuttles electrons from NADH, via FMN and iron-sulfur (Fe-S) centers, to quinones in the respiratory chain. The immediate electron acceptor for the enzyme in this species is believed to be ubiquinone. Couples the redox reaction to proton translocation (for every two electrons transferred, four hydrogen ions are translocated across the cytoplasmic membrane), and thus conserves the redox energy in a proton gradient. This subunit may bind ubiquinone. This is NADH-quinone oxidoreductase subunit H from Herminiimonas arsenicoxydans.